The sequence spans 176 residues: Ribosome rescue factor SmrB (176 aa).

Residues 93 to 168 (LDLHGYRQSE…GDAALLVLID (76 aa)) form the Smr domain.

It belongs to the SmrB family. Associates with collided ribosomes, but not with correctly translating polysomes.

Its function is as follows. Acts as a ribosome collision sensor. Detects stalled/collided disomes (pairs of ribosomes where the leading ribosome is stalled and a second ribosome has collided with it) and endonucleolytically cleaves mRNA at the 5' boundary of the stalled ribosome. Stalled/collided disomes form a new interface (primarily via the 30S subunits) that binds SmrB. Cleaved mRNA becomes available for tmRNA ligation, leading to ribosomal subunit dissociation and rescue of stalled ribosomes. The protein is Ribosome rescue factor SmrB of Shewanella putrefaciens (strain CN-32 / ATCC BAA-453).